Reading from the N-terminus, the 446-residue chain is Phosphoglucosamine mutase (446 aa).

Residue Ser-100 is the Phosphoserine intermediate of the active site. Mg(2+) contacts are provided by Ser-100, Asp-241, Asp-243, and Asp-245. A Phosphoserine modification is found at Ser-100.

This sequence belongs to the phosphohexose mutase family. It depends on Mg(2+) as a cofactor. Activated by phosphorylation.

It carries out the reaction alpha-D-glucosamine 1-phosphate = D-glucosamine 6-phosphate. Catalyzes the conversion of glucosamine-6-phosphate to glucosamine-1-phosphate. The sequence is that of Phosphoglucosamine mutase from Methylorubrum extorquens (strain CM4 / NCIMB 13688) (Methylobacterium extorquens).